We begin with the raw amino-acid sequence, 944 residues long: E3 ubiquitin-protein ligase JMJ24 (944 aa).

2 disordered regions span residues 20–40 (QTRS…GIPD) and 77–103 (ANSA…YSEG). One can recognise a WRC domain in the interval 38–83 (IPDDLRCKRSDGKQWRCTAMSMADKTVCEKHYIQAKKRAANSAFRA). The Nuclear localization signal 1 signature appears at 73 to 80 (KKRAANSA). The segment at 217–269 (GEICHQCQRKDRERIISCLKCNQRAFCHNCLSARYSEISLEEVEKVCPACRGL) adopts a PHD-type; atypical zinc-finger fold. 8 residues coordinate Zn(2+): cysteine 220, cysteine 223, cysteine 234, cysteine 237, cysteine 243, cysteine 246, cysteine 263, and cysteine 266. The Nuclear localization signal 2 signature appears at 323–330 (EKRLREVE). The 253-residue stretch at 621 to 873 (PRLGLLNVAA…ESARLAEEIR (253 aa)) folds into the JmjC domain. Residues 685–703 (ERVRKTKPVPEEPDQKMSE) show a composition bias toward basic and acidic residues. Residues 685–715 (ERVRKTKPVPEEPDQKMSENESLLSPEQKLR) form a disordered region.

It belongs to the JARID1 histone demethylase family. Homodimer. Interacts with RDR2. Binds to CMT3. Associates with the E2 ubiquitin-conjugating enzyme UBC10. In terms of processing, self-ubiquitinates. Expressed in inflorescences, flowers, roots, siliques, leaves and stems, especially in the vasculature (mainly phloem), with highest levels in floral organs.

The protein localises to the nucleus. It carries out the reaction S-ubiquitinyl-[E2 ubiquitin-conjugating enzyme]-L-cysteine + [acceptor protein]-L-lysine = [E2 ubiquitin-conjugating enzyme]-L-cysteine + N(6)-ubiquitinyl-[acceptor protein]-L-lysine.. Binds histone H3 but seems to have lost demethylase activity probably due to its inability to bind iron Fe(2+). Possesses E3 ubiquitin ligase activity and targets directly CMT3 for proteasomal degradation to initiate destabilization of the heterochromatic state (e.g. CHG cytosine methylation and H3K9me2) of endogenous silenced loci. Required for the removal of repressive H3K9me2 histone marks to facilitate the transcription of AtSN1, AtMu1c, solo LTR and SDC, thus counteracting their transcriptional silencing. Mainly required to promote the basal level transcription of silenced loci such as TE and repeats targeted by RNA-dependent DNA methylation (RdDM) for silencing, a specialized branch of the RNA interference (RNAi) pathway. Also cooperates with RNAi pathways for gene silencing both by contributing to the production of 24-nt siRNA to initiate RdDM and by recruiting RDR2 to enable local transcripts to make dsRNA. Antagonizes histone H3K9 demethylase IBM1/JMJ25 function. The protein is E3 ubiquitin-protein ligase JMJ24 of Arabidopsis thaliana (Mouse-ear cress).